The sequence spans 118 residues: MALYDLAHQLAREIKNSDEYTRYKELKDKIMSNEATKSMLLDFQKQQINIQSKQINGQTITDEEKEKFENIKELINLNSDIKEYLDAEYRMGVLFNDIQKILFGGLEIGITENEKSTR.

It belongs to the UPF0342 family.

The sequence is that of UPF0342 protein Hore_03100 from Halothermothrix orenii (strain H 168 / OCM 544 / DSM 9562).